Reading from the N-terminus, the 309-residue chain is MADSKLAQQHGVLVLNKPKGPTSAHCIARIKRLGQKKIGHAGTLDPMAQGVLLVLLGQCTKISGYLMEGGEKIYSGTLELGRTTDTWDDEGETLSTADWTHVTEEDVVRAVDLWTGSSEQQVPAYSAAKHKGQPLYKLAREGKETPVKTRRIEISQAETLAVELPFVRFRVHCSSGTYIRSLAHSLGNRLGCGAVLTELIREYSHPFSLDEAHDLDDVLAEPAELAGRVIPLDKALPHWPKLRLSAADEARVKNGMPHPYDPAEMASMPFTEGIRAVLLDPAGDPLALAETAYRNQVPVWTVLRGLWNT.

The active-site Nucleophile is the Asp45.

Belongs to the pseudouridine synthase TruB family. Type 1 subfamily.

The enzyme catalyses uridine(55) in tRNA = pseudouridine(55) in tRNA. In terms of biological role, responsible for synthesis of pseudouridine from uracil-55 in the psi GC loop of transfer RNAs. The polypeptide is tRNA pseudouridine synthase B (Oleidesulfovibrio alaskensis (strain ATCC BAA-1058 / DSM 17464 / G20) (Desulfovibrio alaskensis)).